A 1096-amino-acid chain; its full sequence is Pentatricopeptide repeat-containing protein At5g55840 (1096 aa).

PPR repeat units lie at residues 122-156 (NPSV…GFNP), 157-191 (SVYT…KICP), 192-226 (DVAT…GYAP), 227-261 (TIVT…GVDA), 262-296 (DVCT…MIHP), 297-331 (NEVT…GLSP), 332-366 (NHVT…GLTP), 367-401 (SEVS…GVCV), 402-436 (GRIT…GIDP), 437-471 (DIVT…GLSP), 472-506 (NGII…GHTR), 507-541 (DHFT…GILP), 542-576 (NTVS…GHHP), 577-607 (TFFT…LHAV), 612-646 (DTVM…SILP), 647-681 (DSYT…GNVL), 683-717 (NKVM…GHTP), 718-752 (DIVT…NGGP), 753-787 (NLTT…GILP), 788-822 (DKLT…GVEV), 823-857 (DRYT…GISL), 858-892 (DKDT…GISP), 893-927 (ESRK…KICP), 928-962 (PNVA…KLVP), 963-997 (TIAS…GLKL), 998-1032 (DLVS…GFLA), and 1033-1068 (NATT…GFIT).

Belongs to the PPR family. P subfamily.

This Arabidopsis thaliana (Mouse-ear cress) protein is Pentatricopeptide repeat-containing protein At5g55840.